The following is a 590-amino-acid chain: Aspartate--tRNA(Asp/Asn) ligase (590 aa).

L-aspartate is bound at residue Glu-175. Residues 199–202 (QQYK) form an aspartate region. 2 residues coordinate L-aspartate: Arg-221 and His-450. Position 221-223 (221-223 (RDE)) interacts with ATP. Glu-484 is a binding site for ATP. Arg-491 is an L-aspartate binding site. 536–539 (GVDR) is an ATP binding site.

The protein belongs to the class-II aminoacyl-tRNA synthetase family. Type 1 subfamily. Homodimer.

Its subcellular location is the cytoplasm. The catalysed reaction is tRNA(Asx) + L-aspartate + ATP = L-aspartyl-tRNA(Asx) + AMP + diphosphate. Aspartyl-tRNA synthetase with relaxed tRNA specificity since it is able to aspartylate not only its cognate tRNA(Asp) but also tRNA(Asn). Reaction proceeds in two steps: L-aspartate is first activated by ATP to form Asp-AMP and then transferred to the acceptor end of tRNA(Asp/Asn). The polypeptide is Aspartate--tRNA(Asp/Asn) ligase (Rhodopseudomonas palustris (strain BisB5)).